A 1732-amino-acid chain; its full sequence is Polycystin-1-like protein 3 (1732 aa).

The signal sequence occupies residues 1-23; that stretch reads MFFKGGSWLWLYIRTSIILGSEL. Over 24-697 the chain is Extracellular; the sequence is NSPAPHGQNN…IKLFLRVTNN (674 aa). The C-type lectin domain occupies 30-138; the sequence is GQNNCYQLNR…CLLKYYFICQ (109 aa). Disulfide bonds link cysteine 51–cysteine 137 and cysteine 112–cysteine 129. N-linked (GlcNAc...) asparagine glycosylation is found at asparagine 286, asparagine 363, asparagine 515, asparagine 537, and asparagine 575. A GAIN-B domain is found at 523–685; the sequence is TSLNMSTHQL…FVVPRTVNVE (163 aa). Intrachain disulfides connect cysteine 635–cysteine 663 and cysteine 650–cysteine 665. Residues 635 to 685 are GPS; the sequence is CYYWEIHNQTWSSAGCQVGPQSTILRTQCLCNHLTFFASDFFVVPRTVNVE. Residues 698–718 form a helical membrane-spanning segment; the sequence is PVGVSLLASLLGFYVITVVWA. The Cytoplasmic portion of the chain corresponds to 719 to 905; it reads RKKDQADMQK…PWNQFTRVQR (187 aa). The PLAT domain maps to 743 to 860; that stretch reads FHYLIQVYTG…GDCELDRVFI (118 aa). Residues 906–926 form a helical membrane-spanning segment; that stretch reads LSCCMTLLLCNMVINVMFWKI. Residues 927-939 lie on the Extracellular side of the membrane; it reads NSTTAKRDEQMRP. A helical transmembrane segment spans residues 940–960; sequence FAVAWSELLVSIHTAVILFPI. Over 961–1154 the chain is Cytoplasmic; that stretch reads NLVIGRLFPL…ISNGLSKWLT (194 aa). Residues 1155 to 1175 traverse the membrane as a helical segment; sequence SVCWLLLGFTSLASAFFTALY. Topologically, residues 1176 to 1198 are extracellular; it reads SLELSKDQATSWMISIILSVLQN. The chain crosses the membrane as a helical span at residues 1199 to 1219; it reads IFISQPVKVVFFTFLYSLMMS. Over 1220–1289 the chain is Cytoplasmic; it reads RMPRLNKENE…KLTGDILVQI (70 aa). Residues 1290–1300 form a helical membrane-spanning segment; it reads LFLTLLMTAIY. Over 1301-1461 the chain is Extracellular; the sequence is SAKNSNRFYL…SFTSLQMSKK (161 aa). A helical membrane pass occupies residues 1462–1491; sequence GCVWSIISQVIYYLLVCYYAFIQGCQLKQQ. Residues 1492 to 1500 are Cytoplasmic-facing; sequence KWRFFTGKR. A helical membrane pass occupies residues 1501 to 1519; sequence NILDTSIILISFILLGLDM. The Extracellular segment spans residues 1520–1550; it reads KSISLHKKNMARYRDDQDRFISFYEAVKVNS. The chain crosses the membrane as a helical span at residues 1551-1572; it reads AATHLVGFPVLLATVQLWNLLR. Over 1573 to 1589 the chain is Cytoplasmic; that stretch reads HSPRLRVISRTLSRAWD. Residues 1590 to 1614 form a helical membrane-spanning segment; that stretch reads EVVGFLLIILILLTGYAIAFNLLFG. The interval 1613–1651 is channel pore-region; that stretch reads FGCSISDYRTFFSSAVTVVGLLMGISHQEEVFALDPVLG. At 1615–1647 the chain is on the extracellular side; the sequence is CSISDYRTFFSSAVTVVGLLMGISHQEEVFALD. A helical membrane pass occupies residues 1648 to 1667; the sequence is PVLGTFLILTSVILMVLVVI. At 1668–1732 the chain is on the cytoplasmic side; it reads NLFVSAILMA…SDTEVLDELP (65 aa).

Belongs to the polycystin family. In terms of assembly, heterotetramer with PKD2L1, composed of 3 subunit of PKD2L1 and 1 subunit of PKD1L3. In terms of processing, autoproteolytically processed at the GPS region of the GAIN-B domain; this cleavage modulates receptor activity. In terms of tissue distribution, highly expressed in placenta, weakly in heart and lung.

It localises to the cell membrane. It catalyses the reaction Ca(2+)(in) = Ca(2+)(out). The enzyme catalyses Na(+)(in) = Na(+)(out). It carries out the reaction K(+)(in) = K(+)(out). The catalysed reaction is Mg(2+)(in) = Mg(2+)(out). Its activity is regulated as follows. The non-selective cation channel is gated following an off-response property by acid: gated open after the removal of acid stimulus, but not during acid application. Regulation of non-selective cation channel activity by external Ca(2+) is bimodal, first sensitizing and subsequently inactivating the current. Its function is as follows. Pore-forming subunit of a heterotetrameric, non-selective cation channel that is permeable to Ca(2+). Also shows permeability towards NA(1+), K(+) and Mg(2+). Heterotetrameric complex channel is activated by external low pH and Ca(2+), but opens only when the extracellular pH rises again and after the removal of acid stimulus. May act as a sour taste receptor in gustatory cells; however, its contribution to sour taste perception is unclear in vivo and may be indirect. This is Polycystin-1-like protein 3 from Homo sapiens (Human).